Consider the following 449-residue polypeptide: Protein adenylyltransferase FICD (449 aa).

The chain crosses the membrane as a helical span at residues 15 to 35 (LLWGWGPILFGLLGSVFVLLL). TPR repeat units follow at residues 96 to 129 (AKAA…NPEF) and 130 to 163 (VEAL…SPCH). An Inhibitory (S/T)XXXE(G/N) motif motif is present at residues 220–225 (TVAIEG). ATP is bound by residues Glu224, 250 to 251 (EQ), 358 to 360 (GNG), and Arg364. A Fido domain is found at 275-410 (ITVNDILEIH…VRPFIRFIAK (136 aa)).

This sequence belongs to the fic family.

It localises to the membrane. The enzyme catalyses L-tyrosyl-[protein] + ATP = O-(5'-adenylyl)-L-tyrosyl-[protein] + diphosphate. It catalyses the reaction L-threonyl-[protein] + ATP = 3-O-(5'-adenylyl)-L-threonyl-[protein] + diphosphate. Its activity is regulated as follows. Adenylyltransferase activity is inhibited by the inhibitory helix present at the N-terminus: Glu-224 binds ATP and competes with ATP-binding at Arg-364, thereby preventing adenylyltransferase activity. Activation dissociates ATP-binding from Glu-224, allowing ordered binding of the entire ATP moiety with the alpha-phosphate in an orientation that is productive for accepting an incoming target hydroxyl side chain. Adenylyltransferase that mediates the addition of adenosine 5'-monophosphate (AMP) to specific residues of target proteins. This chain is Protein adenylyltransferase FICD (ficd), found in Danio rerio (Zebrafish).